We begin with the raw amino-acid sequence, 310 residues long: p-hydroxybenzoic acid efflux pump subunit AaeA (310 aa).

Residues 12–32 (AITLVLVILAFIAIFRAWVYY) traverse the membrane as a helical segment.

Belongs to the membrane fusion protein (MFP) (TC 8.A.1) family.

Its subcellular location is the cell inner membrane. Its function is as follows. Forms an efflux pump with AaeB. The polypeptide is p-hydroxybenzoic acid efflux pump subunit AaeA (Salmonella arizonae (strain ATCC BAA-731 / CDC346-86 / RSK2980)).